Consider the following 293-residue polypeptide: Serine/threonine-protein phosphatase 2A catalytic subunit beta isoform (293 aa).

Mn(2+)-binding residues include D41, H43, D69, and N101. H102 (proton donor) is an active-site residue. Mn(2+) contacts are provided by H151 and H225. Y291 is subject to Phosphotyrosine. L293 is subject to Leucine methyl ester.

It belongs to the PPP phosphatase family. PP-1 subfamily. As to quaternary structure, found in a complex with at least ARL2, PPP2CB, PPP2R1A, PPP2R2A, PPP2R5E and TBCD. Interacts with TBCD. PP2A consists of a common heterodimeric core enzyme (composed of a 36 kDa catalytic subunit (subunit C) and a 65 kDa constant regulatory subunit (PR65) (subunit A)) that associates with a variety of regulatory subunits. Proteins that associate with the core dimer include three families of regulatory subunits B (the R2/B/PR55/B55, R3/B''/PR72/PR130/PR59 and R5/B'/B56 families), the 48 kDa variable regulatory subunit, viral proteins, and cell signaling molecules. Binds PPME1. May indirectly interact with SGO1, most probably through regulatory B56 subunits. Interacts with CTTNBP2NL. Interacts with PTPA. Part of the core of STRIPAK complexes composed of PP2A catalytic and scaffolding subunits, the striatins (PP2A regulatory subunits), the striatin-associated proteins MOB4, STRIP1 and STRIP2, PDCD10 and members of the STE20 kinases, such as STK24 and STK26. Mn(2+) is required as a cofactor. In terms of processing, reversibly methyl esterified on Leu-293 by leucine carboxyl methyltransferase 1 (Lcmt1) and protein phosphatase methylesterase 1 (PPME1). Carboxyl methylation influences the affinity of the catalytic subunit for the different regulatory subunits, thereby modulating the PP2A holoenzyme's substrate specificity, enzyme activity and cellular localization. Phosphorylation of either threonine (by autophosphorylation-activated protein kinase) or tyrosine results in inactivation of the phosphatase. Auto-dephosphorylation has been suggested as a mechanism for reactivation. Post-translationally, may be monoubiquitinated by NOSIP.

The protein localises to the cytoplasm. The protein resides in the nucleus. Its subcellular location is the chromosome. It localises to the centromere. It is found in the cytoskeleton. The protein localises to the spindle pole. It carries out the reaction O-phospho-L-seryl-[protein] + H2O = L-seryl-[protein] + phosphate. The enzyme catalyses O-phospho-L-threonyl-[protein] + H2O = L-threonyl-[protein] + phosphate. In terms of biological role, catalytic subunit of protein phosphatase 2A (PP2A), a serine/threonine phosphatase involved in the regulation of a wide variety of enzymes, signal transduction pathways, and cellular events. PP2A can modulate the activity of phosphorylase B kinase, casein kinase 2, mitogen-stimulated S6 kinase, and MAP-2 kinase. Part of the striatin-interacting phosphatase and kinase (STRIPAK) complexes. STRIPAK complexes have critical roles in protein (de)phosphorylation and are regulators of multiple signaling pathways including Hippo, MAPK, nuclear receptor and cytoskeleton remodeling. Different types of STRIPAK complexes are involved in a variety of biological processes such as cell growth, differentiation, apoptosis, metabolism and immune regulation. The protein is Serine/threonine-protein phosphatase 2A catalytic subunit beta isoform (PPP2CB) of Sus scrofa (Pig).